The primary structure comprises 178 residues: Large ribosomal subunit protein uL6 (178 aa).

This sequence belongs to the universal ribosomal protein uL6 family. As to quaternary structure, part of the 50S ribosomal subunit.

Its function is as follows. This protein binds to the 23S rRNA, and is important in its secondary structure. It is located near the subunit interface in the base of the L7/L12 stalk, and near the tRNA binding site of the peptidyltransferase center. The polypeptide is Large ribosomal subunit protein uL6 (Natranaerobius thermophilus (strain ATCC BAA-1301 / DSM 18059 / JW/NM-WN-LF)).